A 328-amino-acid chain; its full sequence is Serine protease 48 (328 aa).

The first 20 residues, 1 to 20 (MGPAGCAFTLLLLLGISVCG), serve as a signal peptide directing secretion. The Peptidase S1 domain occupies 28 to 267 (VVGGQDAAAG…YQKWINATIS (240 aa)). The cysteines at positions 53 and 69 are disulfide-linked. Catalysis depends on charge relay system residues histidine 68 and aspartate 114. 3 disulfide bridges follow: cysteine 148-cysteine 226, cysteine 181-cysteine 205, and cysteine 216-cysteine 244. The Charge relay system role is filled by serine 220. Asparagine 263 carries N-linked (GlcNAc...) asparagine glycosylation.

This sequence belongs to the peptidase S1 family.

The protein localises to the secreted. The protein is Serine protease 48 (PRSS48) of Homo sapiens (Human).